Here is a 157-residue protein sequence, read N- to C-terminus: Transcription elongation factor GreA (157 aa).

This sequence belongs to the GreA/GreB family.

Functionally, necessary for efficient RNA polymerase transcription elongation past template-encoded arresting sites. The arresting sites in DNA have the property of trapping a certain fraction of elongating RNA polymerases that pass through, resulting in locked ternary complexes. Cleavage of the nascent transcript by cleavage factors such as GreA or GreB allows the resumption of elongation from the new 3'terminus. GreA releases sequences of 2 to 3 nucleotides. The sequence is that of Transcription elongation factor GreA from Hyphomonas neptunium (strain ATCC 15444).